The chain runs to 399 residues: 1-deoxy-D-xylulose 5-phosphate reductoisomerase (399 aa).

The NADPH site is built by Thr-11, Gly-12, Ser-13, Ile-14, and Asn-125. Lys-126 is a binding site for 1-deoxy-D-xylulose 5-phosphate. Residue Glu-127 coordinates NADPH. Position 151 (Asp-151) interacts with Mn(2+). The 1-deoxy-D-xylulose 5-phosphate site is built by Ser-152, Glu-153, Ser-186, and His-209. Glu-153 provides a ligand contact to Mn(2+). Gly-215 contacts NADPH. Residues Ser-222, Asn-227, Lys-228, and Glu-231 each contribute to the 1-deoxy-D-xylulose 5-phosphate site. Glu-231 is a Mn(2+) binding site.

Belongs to the DXR family. It depends on Mg(2+) as a cofactor. Mn(2+) is required as a cofactor.

It catalyses the reaction 2-C-methyl-D-erythritol 4-phosphate + NADP(+) = 1-deoxy-D-xylulose 5-phosphate + NADPH + H(+). It participates in isoprenoid biosynthesis; isopentenyl diphosphate biosynthesis via DXP pathway; isopentenyl diphosphate from 1-deoxy-D-xylulose 5-phosphate: step 1/6. Functionally, catalyzes the NADPH-dependent rearrangement and reduction of 1-deoxy-D-xylulose-5-phosphate (DXP) to 2-C-methyl-D-erythritol 4-phosphate (MEP). The polypeptide is 1-deoxy-D-xylulose 5-phosphate reductoisomerase (Acinetobacter baumannii (strain SDF)).